The following is a 510-amino-acid chain: RNA-splicing ligase RtcB homolog (510 aa).

Residues aspartate 124, cysteine 127, histidine 232, histidine 264, and histidine 358 each contribute to the Mn(2+) site. 231–235 contributes to the GMP binding site; that stretch reads NHYAE. GMP-binding positions include 358–359, 407–410, serine 414, 433–436, and lysine 509; these read HN, GGTM, and HGAG. The active-site GMP-histidine intermediate is the histidine 433.

This sequence belongs to the RtcB family. In terms of assembly, catalytic component of the tRNA-splicing ligase complex. It depends on Mn(2+) as a cofactor.

The enzyme catalyses a 3'-end 3'-phospho-ribonucleotide-RNA + a 5'-end dephospho-ribonucleoside-RNA + GTP = a ribonucleotidyl-ribonucleotide-RNA + GMP + diphosphate. It catalyses the reaction a 3'-end 2',3'-cyclophospho-ribonucleotide-RNA + a 5'-end dephospho-ribonucleoside-RNA + GTP + H2O = a ribonucleotidyl-ribonucleotide-RNA + GMP + diphosphate + H(+). Functionally, catalytic subunit of the tRNA-splicing ligase complex that acts by directly joining spliced tRNA halves to mature-sized tRNAs by incorporating the precursor-derived splice junction phosphate into the mature tRNA as a canonical 3',5'-phosphodiester. May act as an RNA ligase with broad substrate specificity, and may function toward other RNAs. In Trichoplax adhaerens (Trichoplax reptans), this protein is RNA-splicing ligase RtcB homolog.